The following is a 227-amino-acid chain: PKHD-type hydroxylase GDI1238/Gdia_1949 (227 aa).

Residues 78–178 form the Fe2OG dioxygenase domain; it reads RVVPPLFNRY…RLASFFWTQS (101 aa). 3 residues coordinate Fe cation: His96, Asp98, and His159. Arg169 contributes to the 2-oxoglutarate binding site.

Fe(2+) serves as cofactor. L-ascorbate is required as a cofactor.

In Gluconacetobacter diazotrophicus (strain ATCC 49037 / DSM 5601 / CCUG 37298 / CIP 103539 / LMG 7603 / PAl5), this protein is PKHD-type hydroxylase GDI1238/Gdia_1949.